Reading from the N-terminus, the 305-residue chain is Urease accessory protein UreD (305 aa).

The protein belongs to the UreD family. UreD, UreF and UreG form a complex that acts as a GTP-hydrolysis-dependent molecular chaperone, activating the urease apoprotein by helping to assemble the nickel containing metallocenter of UreC. The UreE protein probably delivers the nickel.

The protein resides in the cytoplasm. In terms of biological role, required for maturation of urease via the functional incorporation of the urease nickel metallocenter. In Delftia acidovorans (strain DSM 14801 / SPH-1), this protein is Urease accessory protein UreD.